Reading from the N-terminus, the 140-residue chain is Large ribosomal subunit protein uL11 (140 aa).

This sequence belongs to the universal ribosomal protein uL11 family. Part of the ribosomal stalk of the 50S ribosomal subunit. Interacts with L10 and the large rRNA to form the base of the stalk. L10 forms an elongated spine to which L12 dimers bind in a sequential fashion forming a multimeric L10(L12)X complex. In terms of processing, one or more lysine residues are methylated.

In terms of biological role, forms part of the ribosomal stalk which helps the ribosome interact with GTP-bound translation factors. This chain is Large ribosomal subunit protein uL11, found in Nitratidesulfovibrio vulgaris (strain ATCC 29579 / DSM 644 / CCUG 34227 / NCIMB 8303 / VKM B-1760 / Hildenborough) (Desulfovibrio vulgaris).